Consider the following 227-residue polypeptide: 2-C-methyl-D-erythritol 4-phosphate cytidylyltransferase (227 aa).

This sequence belongs to the IspD/TarI cytidylyltransferase family. IspD subfamily.

It catalyses the reaction 2-C-methyl-D-erythritol 4-phosphate + CTP + H(+) = 4-CDP-2-C-methyl-D-erythritol + diphosphate. The protein operates within isoprenoid biosynthesis; isopentenyl diphosphate biosynthesis via DXP pathway; isopentenyl diphosphate from 1-deoxy-D-xylulose 5-phosphate: step 2/6. Its function is as follows. Catalyzes the formation of 4-diphosphocytidyl-2-C-methyl-D-erythritol from CTP and 2-C-methyl-D-erythritol 4-phosphate (MEP). This Caldanaerobacter subterraneus subsp. tengcongensis (strain DSM 15242 / JCM 11007 / NBRC 100824 / MB4) (Thermoanaerobacter tengcongensis) protein is 2-C-methyl-D-erythritol 4-phosphate cytidylyltransferase.